Reading from the N-terminus, the 423-residue chain is Putative competence-damage inducible protein (423 aa).

Belongs to the CinA family.

The sequence is that of Putative competence-damage inducible protein from Streptococcus uberis (strain ATCC BAA-854 / 0140J).